The primary structure comprises 98 residues: ATP synthase subunit c (98 aa).

The next 2 membrane-spanning stretches (helical) occupy residues 27-47 and 73-93; these read ALALSAPFAVGLAALGSGLGL and IIGAALIEALTIYALIVFFVV.

Belongs to the ATPase C chain family. As to quaternary structure, F-type ATPases have 2 components, F(1) - the catalytic core - and F(0) - the membrane proton channel. F(1) has five subunits: alpha(3), beta(3), gamma(1), delta(1), epsilon(1). F(0) has three main subunits: a(1), b(2) and c(10-14). The alpha and beta chains form an alternating ring which encloses part of the gamma chain. F(1) is attached to F(0) by a central stalk formed by the gamma and epsilon chains, while a peripheral stalk is formed by the delta and b chains.

Its subcellular location is the cell inner membrane. Functionally, f(1)F(0) ATP synthase produces ATP from ADP in the presence of a proton or sodium gradient. F-type ATPases consist of two structural domains, F(1) containing the extramembraneous catalytic core and F(0) containing the membrane proton channel, linked together by a central stalk and a peripheral stalk. During catalysis, ATP synthesis in the catalytic domain of F(1) is coupled via a rotary mechanism of the central stalk subunits to proton translocation. Its function is as follows. Key component of the F(0) channel; it plays a direct role in translocation across the membrane. A homomeric c-ring of between 10-14 subunits forms the central stalk rotor element with the F(1) delta and epsilon subunits. The chain is ATP synthase subunit c from Protochlamydia amoebophila (strain UWE25).